Here is a 364-residue protein sequence, read N- to C-terminus: Dual-specificity RNA methyltransferase RlmN (364 aa).

E93 (proton acceptor) is an active-site residue. Positions 99-337 (EDDRGTLCIS…ATIRKTRGDD (239 aa)) constitute a Radical SAM core domain. A disulfide bridge links C106 with C342. Positions 113, 117, and 120 each coordinate [4Fe-4S] cluster. S-adenosyl-L-methionine contacts are provided by residues 167 to 168 (GE), S199, 221 to 223 (SLH), and N299. Residue C342 is the S-methylcysteine intermediate of the active site.

This sequence belongs to the radical SAM superfamily. RlmN family. [4Fe-4S] cluster serves as cofactor.

It localises to the cytoplasm. It catalyses the reaction adenosine(2503) in 23S rRNA + 2 reduced [2Fe-2S]-[ferredoxin] + 2 S-adenosyl-L-methionine = 2-methyladenosine(2503) in 23S rRNA + 5'-deoxyadenosine + L-methionine + 2 oxidized [2Fe-2S]-[ferredoxin] + S-adenosyl-L-homocysteine. It carries out the reaction adenosine(37) in tRNA + 2 reduced [2Fe-2S]-[ferredoxin] + 2 S-adenosyl-L-methionine = 2-methyladenosine(37) in tRNA + 5'-deoxyadenosine + L-methionine + 2 oxidized [2Fe-2S]-[ferredoxin] + S-adenosyl-L-homocysteine. Functionally, specifically methylates position 2 of adenine 2503 in 23S rRNA and position 2 of adenine 37 in tRNAs. m2A2503 modification seems to play a crucial role in the proofreading step occurring at the peptidyl transferase center and thus would serve to optimize ribosomal fidelity. This chain is Dual-specificity RNA methyltransferase RlmN, found in Dichelobacter nodosus (strain VCS1703A).